The sequence spans 503 residues: Maturase K (503 aa).

The protein belongs to the intron maturase 2 family. MatK subfamily.

Its subcellular location is the plastid. The protein resides in the chloroplast. Its function is as follows. Usually encoded in the trnK tRNA gene intron. Probably assists in splicing its own and other chloroplast group II introns. This chain is Maturase K, found in Diospyros virginiana (American persimmon).